Consider the following 170-residue polypeptide: MVSSIKDMLKYDEGEKLEMYKDTEGYYTIGIGHLITRIKERNAAILSLEEKIGHKVKMDSKNEPIITSSESEALFEKDLSVATKSIESNPTLSTIYKNLDNIRKMAIINMVFQMGVNNVLTFKMSLKLIEEKKWAEAAKEMKNSTWNHQTPNRSNRVISVIETGTLNAYK.

Glu13 serves as the catalytic Proton donor. Asp22 (nucleophile) is an active-site residue.

This sequence belongs to the glycosyl hydrolase 24 family.

It catalyses the reaction Hydrolysis of (1-&gt;4)-beta-linkages between N-acetylmuramic acid and N-acetyl-D-glucosamine residues in a peptidoglycan and between N-acetyl-D-glucosamine residues in chitodextrins.. This is Probable T4-type lysozyme 1 from Dictyostelium discoideum (Social amoeba).